The chain runs to 426 residues: uncharacterized protein (426 aa).

The tract at residues 23-42 (ENPRPTNNPSTSHPSDSYST) is disordered. The span at 26-42 (RPTNNPSTSHPSDSYST) shows a compositional bias: polar residues.

It belongs to the serpin family.

This is an uncharacterized protein from Thermococcus kodakarensis (strain ATCC BAA-918 / JCM 12380 / KOD1) (Pyrococcus kodakaraensis (strain KOD1)).